We begin with the raw amino-acid sequence, 294 residues long: Protein RarD (294 aa).

At 1–11 the chain is on the cytoplasmic side; it reads MDAKQTRQGVL. A helical membrane pass occupies residues 12–34; sequence LALAAYFIWGIAPAYFKLIYYVP. Positions 18 to 145 constitute an EamA domain; the sequence is FIWGIAPAYF…AVCGVLVQLW (128 aa). At 35 to 37 the chain is on the periplasmic side; the sequence is ADE. Residues 38–60 traverse the membrane as a helical segment; the sequence is ILTHRVIWSFFFMVALLSVSRQW. At 61-72 the chain is on the cytoplasmic side; sequence RQVKRLLKTPKK. Residues 73-95 traverse the membrane as a helical segment; that stretch reads IFLLALSAVLVGGNWLLFIWAVN. The Periplasmic portion of the chain corresponds to 96–99; the sequence is NHHM. The helical transmembrane segment at 100 to 122 threads the bilayer; it reads LEASLGYFINPLVNILLGMIFLG. The Cytoplasmic portion of the chain corresponds to 123-128; sequence ERFRRM. Residues 129–146 traverse the membrane as a helical segment; the sequence is QWLAVILAVCGVLVQLWT. Residues 147-149 lie on the Periplasmic side of the membrane; the sequence is FGS. A helical membrane pass occupies residues 150 to 167; it reads LPIIALGLAFSFAFYGLV. Residues 168-179 are Cytoplasmic-facing; it reads RKKIAVEAQTGM. A helical membrane pass occupies residues 180 to 197; that stretch reads LVETLWLLPVAAIYLFGI. At 198-211 the chain is on the periplasmic side; the sequence is ADSPTSHMGQNALS. The helical transmembrane segment at 212 to 234 threads the bilayer; sequence LNLLLMAAGVVTTIPLLCFTGAA. The Cytoplasmic segment spans residues 235–238; the sequence is TRLR. A helical transmembrane segment spans residues 239–261; the sequence is LSTLGFFQYIGPTLMFLLAVTFY. At 262-270 the chain is on the periplasmic side; it reads GEVPGADKM. A helical membrane pass occupies residues 271–290; sequence VTFAFIWVALAIFVMDAIYT. The Cytoplasmic segment spans residues 291-294; that stretch reads QRKK.

The protein belongs to the EamA transporter family.

It is found in the cell inner membrane. The chain is Protein RarD (rarD) from Salmonella typhimurium (strain LT2 / SGSC1412 / ATCC 700720).